A 1238-amino-acid chain; its full sequence is Receptor-type tyrosine-protein phosphatase eta (1238 aa).

A signal peptide spans 1–28; sequence MKPAARETRTPPRSPGLRWALLPLLLLL. At 29–876 the chain is on the extracellular side; the sequence is RQGQVLCAGA…LPQDPGVICG (848 aa). Positions 39–122 constitute a Fibronectin type-III 1 domain; it reads APNPIFDIEA…LNKTITTEPW (84 aa). N-linked (GlcNAc...) asparagine glycans are attached at residues Asn-62, Asn-78, Asn-85, Asn-90, Asn-110, Asn-114, Asn-145, Asn-164, Asn-173, Asn-182, Asn-198, Asn-207, Asn-244, Asn-253, Asn-267, Asn-278, Asn-313, Asn-317, Asn-333, Asn-366, Asn-379, Asn-398, Asn-403, Asn-437, Asn-452, Asn-488, Asn-506, Asn-538, Asn-572, Asn-576, Asn-662, Asn-668, Asn-685, Asn-691, Asn-725, Asn-811, and Asn-838. The Fibronectin type-III 2 domain maps to 170–266; the sequence is PGTNNSFAFP…GQPRNKVFKT (97 aa). Fibronectin type-III domains lie at 270–358, 359–443, 444–527, 528–621, 622–718, and 717–803; these read QVSD…SPDQ, VSDF…TDPS, AVTD…TQYT, RPSS…TEPE, PVTS…TDPP, and PPTP…SEVL. Residues 877 to 897 traverse the membrane as a helical segment; that stretch reads AVFGCIFGALAITAVGGFIFW. The Cytoplasmic portion of the chain corresponds to 898–1238; the sequence is RKKRTDAKNN…MFGKTNGYIA (341 aa). Ser-910 is modified (phosphoserine). Positions 942-1199 constitute a Tyrosine-protein phosphatase domain; sequence FAEEYEDLKL…VFLNQCVLDI (258 aa). Substrate is bound by residues Asp-1106, 1140–1146, and Gln-1184; that span reads CSAGVGR. Cys-1140 serves as the catalytic Phosphocysteine intermediate.

It belongs to the protein-tyrosine phosphatase family. Receptor class 3 subfamily. In terms of assembly, monomer. Interacts with CTNNB1 (phosphorylated) and JUP (phosphorylated). Interacts with FLT3 (phosphorylated). Interacts with GAB1 and GRB2. In terms of tissue distribution, expressed at high levels in brain, kidney, spleen and intestine, and at lower levels in liver, lung, thymus and heart. Expressed at a high level in the myeloid cell line FDC-P2, and at a lower level in the pre-B lymphoid cell line WEHI-231 and the T hybridoma cell line HB21.7.31. Not expressed in the fibroblast cell line NIH3T3 or the erythroid cell line F5-5. Expressed in macrophages.

Its subcellular location is the cell membrane. The protein localises to the cell projection. It is found in the ruffle membrane. It localises to the cell junction. It carries out the reaction O-phospho-L-tyrosyl-[protein] + H2O = L-tyrosyl-[protein] + phosphate. Its function is as follows. Tyrosine phosphatase which dephosphorylates or contributes to the dephosphorylation of CTNND1, FLT3, PDGFRB, MET, KDR, LYN, SRC, MAPK1, MAPK3, EGFR, TJP1, OCLN, PIK3R1 and PIK3R2. Plays a role in cell adhesion, migration, proliferation and differentiation. Has a role in megakaryocytes and platelet formation. Involved in vascular development. May be involved in the mechanism of contact inhibition of cell growth. Regulator of macrophage adhesion and spreading. Positively affects cell-matrix adhesion. Positive regulator of platelet activation and thrombosis. Negative regulator of cell proliferation. Negative regulator of PDGF-stimulated cell migration; through dephosphorylation of PDGFR. Positive regulator of endothelial cell survival, as well as of VEGF-induced SRC and AKT activation; through KDR dephosphorylation. Negative regulator of EGFR signaling pathway; through EGFR dephosphorylation. Enhances the barrier function of epithelial junctions during reassembly. Negatively regulates T-cell receptor (TCR) signaling. Upon T-cell TCR activation, it is up-regulated and excluded from the immunological synapses, while upon T-cell-antigen presenting cells (APC) disengagement, it is no longer excluded and can dephosphorylate PLCG1 and LAT to down-regulate prolongation of signaling. The chain is Receptor-type tyrosine-protein phosphatase eta (Ptprj) from Mus musculus (Mouse).